A 131-amino-acid polypeptide reads, in one-letter code: Small ribosomal subunit protein bS6 (131 aa).

Residues 96–131 (VTEASPMAKAKDERDSRRGPAGDRSYDEANAEEIAE) form a disordered region. The span at 104 to 122 (KAKDERDSRRGPAGDRSYD) shows a compositional bias: basic and acidic residues.

It belongs to the bacterial ribosomal protein bS6 family.

In terms of biological role, binds together with bS18 to 16S ribosomal RNA. The protein is Small ribosomal subunit protein bS6 of Shewanella sp. (strain MR-4).